The chain runs to 316 residues: Cytochrome c biogenesis protein CcsA (316 aa).

Helical transmembrane passes span 9–29 (IFVN…LINL), 39–61 (FSKN…RYLQ), 70–90 (LYES…ILEV), 94–114 (IGLS…FATL), 143–163 (LISY…LSLF), 224–244 (TISL…VWAN), 257–271 (ETWA…AIYL), and 289–309 (SMGF…GVGL).

It belongs to the CcmF/CycK/Ccl1/NrfE/CcsA family. May interact with Ccs1.

It localises to the plastid. It is found in the chloroplast thylakoid membrane. Functionally, required during biogenesis of c-type cytochromes (cytochrome c6 and cytochrome f) at the step of heme attachment. The chain is Cytochrome c biogenesis protein CcsA from Adiantum capillus-veneris (Maidenhair fern).